The following is a 254-amino-acid chain: Ribosomal RNA small subunit methyltransferase G (254 aa).

Residues 84–109 (NTESKTSLNNAETKNTNEALLTSEPF) form an insert region. Residues Gly-115, Phe-120, 171–172 (AE), and Arg-185 each bind S-adenosyl-L-methionine.

Belongs to the methyltransferase superfamily. RNA methyltransferase RsmG family.

The protein resides in the cytoplasm. Specifically methylates the N7 position of a guanine in 16S rRNA. The protein is Ribosomal RNA small subunit methyltransferase G of Treponema denticola (strain ATCC 35405 / DSM 14222 / CIP 103919 / JCM 8153 / KCTC 15104).